A 92-amino-acid chain; its full sequence is Secreted RxLR effector protein RXLR-C02 (92 aa).

A signal peptide spans 1–21 (MQFHLLVMTTIAASFAATGSA). The RxLR signature appears at 48–51 (RALR). Residues 54–75 (ENRGLIGDDSDSSISDSDSEAK) form a disordered region.

The protein belongs to the RxLR effector family.

It is found in the secreted. It localises to the host cytoplasm. Its subcellular location is the host nucleus. In terms of biological role, secreted effector that suppresses pattern-triggered immunity (PTI) in plant host. The chain is Secreted RxLR effector protein RXLR-C02 from Plasmopara halstedii (Downy mildew of sunflower).